The primary structure comprises 404 residues: Propionate kinase (404 aa).

This sequence belongs to the acetokinase family. PduW subfamily.

Its subcellular location is the cytoplasm. The catalysed reaction is propanoate + ATP = propanoyl phosphate + ADP. The protein operates within polyol metabolism; 1,2-propanediol degradation. Functionally, works with phosphate acetyltransferase (pta) to capture exogenous propionate and regenerate propionyl-CoA during degradation of 1,2-propanediol (1,2-PD). The sequence is that of Propionate kinase from Klebsiella pneumoniae (strain 342).